Here is a 438-residue protein sequence, read N- to C-terminus: Serine hydroxymethyltransferase (438 aa).

Residues Leu135 and 139–141 (GHL) contribute to the (6S)-5,6,7,8-tetrahydrofolate site. Residue Lys244 is modified to N6-(pyridoxal phosphate)lysine. A disordered region spans residues 361–383 (GVPNDPLPPVKTSGIRVGSPAGT).

The protein belongs to the SHMT family. As to quaternary structure, homodimer. The cofactor is pyridoxal 5'-phosphate.

It is found in the cytoplasm. The enzyme catalyses (6R)-5,10-methylene-5,6,7,8-tetrahydrofolate + glycine + H2O = (6S)-5,6,7,8-tetrahydrofolate + L-serine. The protein operates within one-carbon metabolism; tetrahydrofolate interconversion. Its pathway is amino-acid biosynthesis; glycine biosynthesis; glycine from L-serine: step 1/1. Functionally, catalyzes the reversible interconversion of serine and glycine with tetrahydrofolate (THF) serving as the one-carbon carrier. This reaction serves as the major source of one-carbon groups required for the biosynthesis of purines, thymidylate, methionine, and other important biomolecules. Also exhibits THF-independent aldolase activity toward beta-hydroxyamino acids, producing glycine and aldehydes, via a retro-aldol mechanism. This is Serine hydroxymethyltransferase from Rhizorhabdus wittichii (strain DSM 6014 / CCUG 31198 / JCM 15750 / NBRC 105917 / EY 4224 / RW1) (Sphingomonas wittichii).